Consider the following 443-residue polypeptide: MRLTRKRLCSFLIALYCLFSLYAAYHVFFGRRRQAPAGSPRGLRKGAAPARERRGREQSTLESEEWNPWEGDEKNEQQHRFKTSLQILDKSTKGKTDLSVQIWGKAAIGLYLWEHIFEGLLDPSDVTAQWREGKSIVGRTQYSFITGPAVIPGYFSVDVNNVVLILNGREKAKIFYATQWLLYAQNLVQIQKLQHLAVVLLGNEHCDNEWINPFLKRNGGFVELLFIIYDSPWINDVDVFQWPLGVATYRNFPVVEASWSMLHDERPYLCNFLGTIYENSSRQALMNILKKDGNDKLCWVSAREHWQPQETNESLKNYQDALLQSDLTLCPVGVNTECYRIYEACSYGSIPVVEDVMTAGNCGNTSVHHGAPLQLLKSMGAPFIFIKNWKELPAVLEKEKTIILQEKIERRKMLLQWYQHFKTELKMKFTNILESSFLMNNKS.

At 1 to 9 (MRLTRKRLC) the chain is on the cytoplasmic side. A helical; Signal-anchor for type II membrane protein membrane pass occupies residues 10–30 (SFLIALYCLFSLYAAYHVFFG). Residues 31 to 443 (RRRQAPAGSP…ESSFLMNNKS (413 aa)) are Extracellular-facing. Positions 35-76 (APAGSPRGLRKGAAPARERRGREQSTLESEEWNPWEGDEKNE) are disordered. A compositionally biased stretch (basic and acidic residues) spans 50–59 (ARERRGREQS).

It belongs to the RXYLT1 family. Forms a complex composed of FKTN/fukutin, FKRP and RXYLT1/TMEM5.

It is found in the golgi apparatus membrane. The catalysed reaction is 3-O-[Rib-ol-P-Rib-ol-P-3-beta-D-GalNAc-(1-&gt;3)-beta-D-GlcNAc-(1-&gt;4)-(O-6-P-alpha-D-Man)]-Thr-[protein] + UDP-alpha-D-xylose = 3-O-[beta-D-Xyl-(1-&gt;4)-Rib-ol-P-Rib-ol-P-3-beta-D-GalNAc-(1-&gt;3)-beta-D-GlcNAc-(1-&gt;4)-(O-6-P-alpha-D-Man)]-Thr-[protein] + UDP + H(+). Its pathway is protein modification; protein glycosylation. Its function is as follows. Acts as a UDP-D-xylose:ribitol-5-phosphate beta1,4-xylosyltransferase, which catalyzes the transfer of UDP-D-xylose to ribitol 5-phosphate (Rbo5P) to form the Xylbeta1-4Rbo5P linkage on O-mannosyl glycan. Participates in the biosynthesis of the phosphorylated O-mannosyl trisaccharide (N-acetylgalactosamine-beta-3-N-acetylglucosamine-beta-4-(phosphate-6-)mannose), a carbohydrate structure present in alpha-dystroglycan (DAG1), which is required for binding laminin G-like domain-containing extracellular proteins with high affinity. The protein is Ribitol-5-phosphate xylosyltransferase 1 of Homo sapiens (Human).